Here is a 309-residue protein sequence, read N- to C-terminus: Olfactory receptor 8U9 (309 aa).

At 1–28 (MTQINCTQVTEFILVGLTDRQELKMPLF) the chain is on the extracellular side. N-linked (GlcNAc...) asparagine glycosylation occurs at Asn-5. Residues 29-49 (VLFLSIYLFTVVGNLGLILLI) traverse the membrane as a helical segment. Topologically, residues 50–56 (RTDEKLN) are cytoplasmic. The helical transmembrane segment at 57–77 (TPMYFFLSNLAFVDFCYSSVI) threads the bilayer. Residues 78 to 97 (TPKMLGNFLYKQNSISFNAC) lie on the Extracellular side of the membrane. A disulfide bridge links Cys-97 with Cys-179. Residues 98–118 (AAQLGCFLAFMTAECLLLASM) traverse the membrane as a helical segment. The Cytoplasmic portion of the chain corresponds to 119-143 (AYDRYVAICNPLMYMVVMSPGICIQ). Residues 144–164 (LVAAPHSYSILVALFHTILTF) traverse the membrane as a helical segment. Residues 165-204 (RLSYCHSNIVNHFYCDDMPLLRLTCSDTRFKQLWIFACAG) lie on the Extracellular side of the membrane. A helical membrane pass occupies residues 205–225 (IMFISSLLIVFVSYMFIISAI). At 226 to 239 (LRMHSAEGRQKAFS) the chain is on the cytoplasmic side. A helical transmembrane segment spans residues 240–260 (TCGSHMLAVTIFYGTLIFMYL). Residues 261–272 (QPSSSHALDTDK) are Extracellular-facing. Residues 273 to 293 (MASVFYTVIIPMLNPLIYSLQ) traverse the membrane as a helical segment. Topologically, residues 294–309 (NKEVKEALKKIIINKN) are cytoplasmic.

It belongs to the G-protein coupled receptor 1 family.

The protein resides in the cell membrane. Odorant receptor. The chain is Olfactory receptor 8U9 (OR8U9) from Homo sapiens (Human).